We begin with the raw amino-acid sequence, 376 residues long: Actin, macronuclear (376 aa).

It belongs to the actin family.

It localises to the cytoplasm. The protein resides in the cytoskeleton. The enzyme catalyses ATP + H2O = ADP + phosphate + H(+). Functionally, actins are highly conserved proteins that are involved in various types of cell motility and are ubiquitously expressed in all eukaryotic cells. This is Actin, macronuclear from Tetrahymena thermophila.